Consider the following 346-residue polypeptide: MNYSSQACITAFNLAYNLVFQASNYYQMIISFCSVFPLIYFLLFKLSKSSFHGNLKTIFISYFVSLVAFSMTHLTTSTTQIIKSIISTDNCDLIISPFPHKIWNFFILFFLTLSTFFPCSVTIERYFAMETAEKYEKASVVMGPILVGFNVLLNFCIIFNMLKDESYTDGNVSFSVIPAVAAQKAFTFFIIIFFVNLVDVIFDLILLRMNLKLKLQLKNSSLAVKYQLEEVYQSTKFSVFLILIHIISFGIYVSAVVFFRYFGNLIISDPDSLFGVRTFSTTIVPTYNFVIGSFSSFFNRIKLKKSEGATIQMSSTGKSGANNYDQAIFSIWNSVSGPIDRNVTLV.

Helical transmembrane passes span 26–46, 57–77, 102–122, 139–159, 186–206, 239–259, and 278–298; these read YQMI…LFKL, TIFI…LTTS, IWNF…CSVT, SVVM…CIIF, FTFF…DLIL, VFLI…VVFF, and TFST…SSFF.

The protein belongs to the nematode receptor-like protein srb family.

It localises to the membrane. This chain is Serpentine receptor class beta-11 (srb-11), found in Caenorhabditis elegans.